Here is a 295-residue protein sequence, read N- to C-terminus: Phosphatidylserine decarboxylase proenzyme (295 aa).

Active-site charge relay system; for autoendoproteolytic cleavage activity residues include D101, H158, and S262. Catalysis depends on S262, which acts as the Schiff-base intermediate with substrate; via pyruvic acid; for decarboxylase activity. S262 is modified (pyruvic acid (Ser); by autocatalysis).

It belongs to the phosphatidylserine decarboxylase family. PSD-B subfamily. Prokaryotic type I sub-subfamily. As to quaternary structure, heterodimer of a large membrane-associated beta subunit and a small pyruvoyl-containing alpha subunit. The cofactor is pyruvate. In terms of processing, is synthesized initially as an inactive proenzyme. Formation of the active enzyme involves a self-maturation process in which the active site pyruvoyl group is generated from an internal serine residue via an autocatalytic post-translational modification. Two non-identical subunits are generated from the proenzyme in this reaction, and the pyruvate is formed at the N-terminus of the alpha chain, which is derived from the carboxyl end of the proenzyme. The autoendoproteolytic cleavage occurs by a canonical serine protease mechanism, in which the side chain hydroxyl group of the serine supplies its oxygen atom to form the C-terminus of the beta chain, while the remainder of the serine residue undergoes an oxidative deamination to produce ammonia and the pyruvoyl prosthetic group on the alpha chain. During this reaction, the Ser that is part of the protease active site of the proenzyme becomes the pyruvoyl prosthetic group, which constitutes an essential element of the active site of the mature decarboxylase.

Its subcellular location is the cell membrane. It catalyses the reaction a 1,2-diacyl-sn-glycero-3-phospho-L-serine + H(+) = a 1,2-diacyl-sn-glycero-3-phosphoethanolamine + CO2. The protein operates within phospholipid metabolism; phosphatidylethanolamine biosynthesis; phosphatidylethanolamine from CDP-diacylglycerol: step 2/2. In terms of biological role, catalyzes the formation of phosphatidylethanolamine (PtdEtn) from phosphatidylserine (PtdSer). The chain is Phosphatidylserine decarboxylase proenzyme from Pasteurella multocida (strain Pm70).